The primary structure comprises 459 residues: Cysteine--tRNA ligase (459 aa).

Residue cysteine 31 coordinates Zn(2+). Positions proline 33 to asparagine 43 match the 'HIGH' region motif. The Zn(2+) site is built by cysteine 216, histidine 241, and glutamate 245. The 'KMSKS' region signature appears at lysine 274 to serine 278. ATP is bound at residue lysine 277.

Belongs to the class-I aminoacyl-tRNA synthetase family. Monomer. It depends on Zn(2+) as a cofactor.

The protein localises to the cytoplasm. The catalysed reaction is tRNA(Cys) + L-cysteine + ATP = L-cysteinyl-tRNA(Cys) + AMP + diphosphate. The chain is Cysteine--tRNA ligase from Rickettsia canadensis (strain McKiel).